A 300-amino-acid polypeptide reads, in one-letter code: Quinolinate synthase (300 aa).

The iminosuccinate site is built by histidine 21 and serine 38. Residue cysteine 83 coordinates [4Fe-4S] cluster. Iminosuccinate is bound by residues 109-111 and serine 126; that span reads YVN. Cysteine 170 serves as a coordination point for [4Fe-4S] cluster. Iminosuccinate-binding positions include 196–198 and threonine 213; that span reads HPE. Cysteine 256 contacts [4Fe-4S] cluster.

It belongs to the quinolinate synthase family. Type 2 subfamily. Monomer. Homodimer. The cofactor is [4Fe-4S] cluster.

It is found in the cytoplasm. The catalysed reaction is iminosuccinate + dihydroxyacetone phosphate = quinolinate + phosphate + 2 H2O + H(+). It participates in cofactor biosynthesis; NAD(+) biosynthesis; quinolinate from iminoaspartate: step 1/1. Catalyzes the condensation of iminoaspartate with dihydroxyacetone phosphate to form quinolinate. The sequence is that of Quinolinate synthase from Pyrococcus horikoshii (strain ATCC 700860 / DSM 12428 / JCM 9974 / NBRC 100139 / OT-3).